A 169-amino-acid polypeptide reads, in one-letter code: MIFKINKIKNVHMYDVAIILILIIVVFKLIKSEDSKFLNNNVQFEQTKDNKFGVNSTKLNFLFNFLSSSSNKSVFEIQKKNINNNYNNNNYNNNSKKSYNYIIVGELNRNKIIRPSDIQREISEINTVEKTVDIKEKRLGSFKRGVLKIPLAFVQMIAISIALICLLIP.

Helical transmembrane passes span 10–30 (NVHMYDVAIILILIIVVFKLI) and 149–169 (IPLAFVQMIAISIALICLLIP).

The protein resides in the membrane. This is an uncharacterized protein from Dictyostelium discoideum (Social amoeba).